The following is a 626-amino-acid chain: Chaperone protein HtpG (626 aa).

An a; substrate-binding region spans residues 1–339; sequence MSTNQETRGF…SNDLPLNVSR (339 aa). The tract at residues 340–555 is b; the sequence is EILQDNKVTA…NDQMTTQMAK (216 aa). The tract at residues 556-626 is c; that stretch reads LFAAAGQPVP…FIKRVNNLLG (71 aa).

The protein belongs to the heat shock protein 90 family. As to quaternary structure, homodimer.

It is found in the cytoplasm. Molecular chaperone. Has ATPase activity. The protein is Chaperone protein HtpG of Histophilus somni (strain 2336) (Haemophilus somnus).